Here is a 225-residue protein sequence, read N- to C-terminus: Uridylate kinase (225 aa).

9-10 (GS) contributes to the ATP binding site. G44 contacts UMP. ATP contacts are provided by G45 and R49. UMP contacts are provided by residues D66 and 114 to 120 (THPGHTT). Positions 140, 141, 146, and 149 each coordinate ATP.

Belongs to the UMP kinase family. In terms of assembly, homohexamer.

Its subcellular location is the cytoplasm. The enzyme catalyses UMP + ATP = UDP + ADP. Its pathway is pyrimidine metabolism; CTP biosynthesis via de novo pathway; UDP from UMP (UMPK route): step 1/1. Its activity is regulated as follows. Inhibited by UTP. Catalyzes the reversible phosphorylation of UMP to UDP. This is Uridylate kinase from Pyrococcus abyssi (strain GE5 / Orsay).